The sequence spans 163 residues: Iron-sulfur cluster assembly protein 2 (163 aa).

The transit peptide at 1-48 (MMMLRQTSRKAYLGLQASPLGLGRRLYHENVIDHFENPRNVGSFNRND) directs the protein to the mitochondrion.

It belongs to the NifU family. As to quaternary structure, component of the core Fe-S cluster (ISC) assembly machinery. It depends on [2Fe-2S] cluster as a cofactor. In terms of tissue distribution, mostly expressed in leaves, pollen and flowers.

Its subcellular location is the mitochondrion matrix. Its pathway is cofactor biosynthesis; iron-sulfur cluster biosynthesis. Scaffold protein for the de novo synthesis of iron-sulfur (Fe-S) clusters within mitochondria, which is required for maturation of both mitochondrial and cytoplasmic [2Fe-2S] and [4Fe-4S] proteins. First, a [2Fe-2S] cluster is transiently assembled on the scaffold protein ISCU (ISU1, ISU2 or ISU3). In a second step, the cluster is released from ISCU, transferred to a glutaredoxin, followed by the formation of mitochondrial [2Fe-2S] proteins, the synthesis of [4Fe-4S] clusters and their target-specific insertion into the recipient apoproteins. Cluster assembly on ISCU depends on the function of the cysteine desulfurase complex NFS1-ISD11, which serves as the sulfur donor for cluster synthesis, the iron-binding protein frataxin as the putative iron donor, and the electron transfer chain comprised of ferredoxin reductase and ferredoxin, which receive their electrons from NADH. This Arabidopsis thaliana (Mouse-ear cress) protein is Iron-sulfur cluster assembly protein 2 (ISU2).